Reading from the N-terminus, the 213-residue chain is Pyrrolidone-carboxylate peptidase (213 aa).

Residues glutamate 81, cysteine 144, and histidine 166 contribute to the active site.

Belongs to the peptidase C15 family. In terms of assembly, homodimer.

The protein resides in the cytoplasm. The enzyme catalyses Release of an N-terminal pyroglutamyl group from a polypeptide, the second amino acid generally not being Pro.. Removes 5-oxoproline from various penultimate amino acid residues except L-proline. The polypeptide is Pyrrolidone-carboxylate peptidase (pcp) (Pseudomonas fluorescens).